The chain runs to 417 residues: Queuine tRNA-ribosyltransferase accessory subunit 2 (417 aa).

The Zn(2+) site is built by C324, C326, C329, and H355.

Belongs to the queuine tRNA-ribosyltransferase family. QTRT2 subfamily. In terms of assembly, heterodimer of a catalytic subunit and an accessory subunit. Zn(2+) serves as cofactor.

The protein localises to the cytoplasm. In terms of biological role, non-catalytic subunit of the queuine tRNA-ribosyltransferase (TGT) that catalyzes the base-exchange of a guanine (G) residue with queuine (Q) at position 34 (anticodon wobble position) in tRNAs with GU(N) anticodons (tRNA-Asp, -Asn, -His and -Tyr), resulting in the hypermodified nucleoside queuosine (7-(((4,5-cis-dihydroxy-2-cyclopenten-1-yl)amino)methyl)-7-deazaguanosine). This chain is Queuine tRNA-ribosyltransferase accessory subunit 2, found in Drosophila virilis (Fruit fly).